The chain runs to 285 residues: tRNA pseudouridine synthase B (285 aa).

Asp40 (nucleophile) is an active-site residue.

It belongs to the pseudouridine synthase TruB family. Type 1 subfamily.

The enzyme catalyses uridine(55) in tRNA = pseudouridine(55) in tRNA. Functionally, responsible for synthesis of pseudouridine from uracil-55 in the psi GC loop of transfer RNAs. This Caldanaerobacter subterraneus subsp. tengcongensis (strain DSM 15242 / JCM 11007 / NBRC 100824 / MB4) (Thermoanaerobacter tengcongensis) protein is tRNA pseudouridine synthase B.